A 503-amino-acid polypeptide reads, in one-letter code: Probable cytosol aminopeptidase (503 aa).

Mn(2+) is bound by residues K271 and D276. The active site involves K283. Residues D294, D353, and E355 each contribute to the Mn(2+) site. The active site involves R357.

It belongs to the peptidase M17 family. Requires Mn(2+) as cofactor.

It is found in the cytoplasm. It catalyses the reaction Release of an N-terminal amino acid, Xaa-|-Yaa-, in which Xaa is preferably Leu, but may be other amino acids including Pro although not Arg or Lys, and Yaa may be Pro. Amino acid amides and methyl esters are also readily hydrolyzed, but rates on arylamides are exceedingly low.. It carries out the reaction Release of an N-terminal amino acid, preferentially leucine, but not glutamic or aspartic acids.. In terms of biological role, presumably involved in the processing and regular turnover of intracellular proteins. Catalyzes the removal of unsubstituted N-terminal amino acids from various peptides. In Chlorobium phaeobacteroides (strain DSM 266 / SMG 266 / 2430), this protein is Probable cytosol aminopeptidase.